Here is a 2535-residue protein sequence, read N- to C-terminus: MEPHVLGAGLYWLLLPCTLLAASLLRFNALSLVYLLFLLLLPWLPGPSRHSIPGHTGRLLRALLCLSLLFLVAHVAFQICLHTMPRLNQLLGQNCNLWANVSQHIGVTRLDLKDIFNTTRLVAPDLGVLVASSLCLGLCGRLTRKARQSQRTQELEEDDIDAAPAAGLQGAPTLATKRRLWLAPRFRITAHWLLVTSGRMLVIVLLALAGIAHPSAFSSVYLMVFLAICTWWSCHFPLSSLGFNTLCVMVSCFGAGHLVCLYCYQTPFVQSVLLPGSLWARLFGLKNFVDIPNCSSPNVLVLNTKHAWPIYVSPGILLLLYYTATSLLKLRKGRFSELRKEIPREDEEHELELDQLEPEPQARGTTQGATPTTTGPDIDNCTVHVLTSQSPVRQRPVRPRLAELKEMSPLHGLGHLILDQSYVCALIAMMVWSIMYHSWLTFVLLLWACLIWTVRSRHQLAMLCSPCILLYGLTLCCLRYVWAMELPELPTTLGPVSLHQLGLEHTRYPCLDLGAMLLYLLTFWLLLRQFVKEKLLKKRKAPSTLLEVTVSDTEPTQTQTLLRSLGELVTGIYVKYWIYVCAGMFIVVSFAGRLVVYKIVYMFLFLLCLTLFQVYYTLWRKLLRVFWWLVVAYTMLVLIAVYTFQFQDFPTYWRNLTGFTDEQLGDLGLEQFSVSELFSSILIPGFFLLACILQLHYFHRPFMQLTDLEHVPPPGTRRLRWAHRQDTVSEAPLLQHQEEEEVFRDDGQSMDGPHQTTQVPEGTASKWGLVADRLLDLASSFSAVLTRIQVFVRCLLELHVFKLVALYTVWVALKEVSVMNLLLVVLWAFALPYPRFRPMASCLSTVWTCIIIVCKMLYQLKIVNPHEYSSNCTEPFPNNTNLQPLEISQSLLYRGPVDPANWFGVRKGYPNLGYIQNHLQILLLLVFEAVVYRRQEHYRRQHQQAPLPAQALCADGTRQRLDQDLLSCLKYFINFFFYKFGLEICFLMAVNVIGQRMNFMVILHGCWLVAILTRRRREAIARLWPNYCLFLTLFLLYQYLLCLGMPPALCIDYPWRWSQAIPMNSALIKWLYLPDFFRAPNSTNLISDFLLLLCASQQWQVFSAEQTEEWQRMAGVNTDHLEPLRGEPNPIPNFIHCRSYLDMLKVAVFRYLFWLVLVVVFVTGATRISIFGLGYLLACFYLLLFGTTLLQKDTRAQLVLWDCLILYNVTVIISKNMLSLLSCVFVEQMQSNFCWVIQLFSLVCTVKGYYDPKEMKTRDRDCLLPVEEAGIIWDSICFFFLLLQRRVFLSHYFLHVSADLKATALQASRGFALYNAANIKNINFHRQTEERSLAQLKRQMKRIRAKQEKYRQSQASRGQLQSTDPQEPGPDSPGGSSPPRTQWWRPWQDHATVIHSGDYFLFESDSEEEEEALPEDPRPAAQSAFQMAYQAWVTNAQTVLRQRREQARRDRAEQLASGGDLSPEVELVDVPENEMAGHSHVMQRVLSTMQFLWVLGQATVDGLTRWLRTFTKDHRTMSDVLCAERYLLTQELLRGGEVHRGVLDQLYVSEDEIALSGPVENRDGPSTASSGLGAEEPLSSMTDDTGSPLSTGYNTRSGSEEIITDTGGLQAGTSLHGSQELLANARTRMRTASELLLDRRLRIPELEEAEQFEAQQGRTLRLLRAMYQCVAAHSELLCYFIIILNHMVTASAASLVLPVLVFLWAMLTIPRPSKRFWMTAIVFTEVMVVTKYLFQFGFFPWNSYIVLRRYENKPYFPPRILGLEKTDSYIKYDLVQLMALFFHRSQLLCYGLWDHEEDGVPKDHCRSSEKDQEAEEESEAKLESQPETGTGHPEEPVLTGTPKDHIQGKGSVRSKDEIQDPPEDLKPQHRRHISIRFRRRKETQGPKGAAVVEAEHEEGEEGREAAGRKRLRRPREGLKIREKMKAAGRRLQSFCLSLAQSFYQPLRRFFHDILHTKYRAATDVYALMFLADIVDIVVIIFGFWAFGKHSAATDIASSLSDDQVPQAFLFMLLVQFGTMVIDRALYLRKTVLGNLAFQVVLVVAIHLWMFFILPAVTERMFRQNAVAQLWYFVKCIYFALSAYQIRCGYPTRILGNFLTKKYNHLNLFLFQGFRLVPFLVELRAVMDWVWTDTTLSLSNWMCVEDIYANIFIIKCSRETEKKYPQPKGQKKKKIVKYGMGGLIILFLIAIIWFPLLFMSLIRSVVGVVNQPIDVTVTLKLGGYEPLFTMSAQQPSIVPFTPEDYEELSQQFDPYPLAMQFISQYSPEDIVTAQIEGSSGALWRISPPSRAQMKHELYNGTADITLRFTWNFQRDLAKGGSVEYTNEKHTLELAPNSTARRQLAQLLEGRPDQSVVIPHLFPKYIRAPNGPEANPVKQLQPDEEEDYLGVRIQLRREQVGTGTSGEQAGTKASDFLEWWVIELQDCQAECNLLPMVIFSDKVSPPSLGFLAGYGIVGLYVSIVLVVGKFVRGFFSDISHSIMFEELPCVDRILKLCQDIFLVRETRELELEEELYAKLIFLYRSPETMIKWTREKE.

A run of 3 helical transmembrane segments spans residues Leu-13 to Leu-25, Ala-29 to Leu-44, and Leu-59 to Leu-81. The N-linked (GlcNAc...) asparagine glycan is linked to Asn-100. Transmembrane regions (helical) follow at residues Val-122–Leu-138, Leu-193–Ala-212, Ser-215–Cys-234, Leu-246–Thr-266, and Trp-308–Leu-328. Over residues Asp-346–Glu-357 the composition is skewed to acidic residues. Positions Asp-346–Asp-377 are disordered. The span at Pro-358–Pro-376 shows a compositional bias: low complexity. Asn-380 carries an N-linked (GlcNAc...) asparagine glycan. 8 helical membrane passes run Leu-416–Tyr-436, Trp-439–Val-454, Leu-460–Trp-482, Cys-510–Leu-527, Ile-572–Gly-592, Leu-594–Val-614, Val-625–Phe-646, and Leu-677–Leu-693. Ser-749 is subject to Phosphoserine. 12 helical membrane-spanning segments follow: residues Leu-803–Lys-814, Val-818–Leu-831, Val-846–Leu-860, Gly-913–Arg-940, Gly-981–Arg-996, Phe-999–Arg-1014, Cys-1028–Leu-1043, Thr-1083–Ala-1104, Tyr-1140–Thr-1166, Gly-1172–Leu-1190, Leu-1204–Ser-1222, and Ile-1272–Phe-1288. Residues His-1325–Ser-1356 adopt a coiled-coil conformation. Disordered regions lie at residues Ala-1345–Trp-1383 and Ser-1556–Ser-1597. A compositionally biased stretch (polar residues) spans Gln-1352–Pro-1365. Phosphoserine is present on residues Ser-1372 and Ser-1377. Residues Ser-1579–Ser-1597 are compositionally biased toward polar residues. Residues Ser-1614, Ser-1618, and Ser-1633 each carry the phosphoserine modification. Transmembrane regions (helical) follow at residues Pro-1644 to Met-1687, Ala-1692 to Leu-1707, Phe-1716 to Phe-1734, and Asp-1767 to Leu-1788. Composition is skewed to basic and acidic residues over residues Pro-1801–Asp-1811 and Pro-1842–Pro-1867. The tract at residues Pro-1801–Leu-1911 is disordered. Positions Gln-1868–Lys-1881 are enriched in basic residues. A run of 5 helical transmembrane segments spans residues Tyr-1965–Trp-1984, Pro-2005–Ile-2021, Ala-2036–Val-2056, Ala-2065–Leu-2080, and Gly-2181–Ile-2201. Cys-2425 and Cys-2429 are disulfide-bonded. Residues Leu-2446–Gly-2466 form a helical membrane-spanning segment.

It belongs to the PIEZO (TC 1.A.75) family. In terms of assembly, homotrimer; the homotrimer forms a propeller-shaped Piezo channel with a cation-ion conducting pore. Heterotrimeric interaction may occur between PIEZO1 and PIEZO2. Interacts with PKD2. Interacts with STOM13. Interacts with TMC1, TMC2, PCDH15 and CIB2; the interaction may be part of the MET complex. Interacts with MDFIC (via C-terminus); the interaction prolongs Piezo channel inactivation. Interacts with MDFI (via C-terminus); the interaction prolongs Piezo channel inactivation. In terms of tissue distribution, moderate expression in lung and kidney. Very weak expression in heart, spleen and liver.

It localises to the endoplasmic reticulum membrane. It is found in the endoplasmic reticulum-Golgi intermediate compartment membrane. Its subcellular location is the cell membrane. The protein localises to the cell projection. The protein resides in the lamellipodium membrane. It carries out the reaction K(+)(in) = K(+)(out). It catalyses the reaction Na(+)(in) = Na(+)(out). The enzyme catalyses Ca(2+)(in) = Ca(2+)(out). The catalysed reaction is Mg(2+)(in) = Mg(2+)(out). Its activity is regulated as follows. Regulated by auxillary subunits MDFIC and MDFI. Down-regulated by phosphatidylserines exposed on the cell surface. Divalent ions decrease the single-channel permeability of K(+). Functionally, pore-forming subunit of the mechanosensitive non-specific cation Piezo channel required for rapidly adapting mechanically activated (MA) currents and has a key role in sensing touch and tactile pain. Piezo channels are homotrimeric three-blade propeller-shaped structures that utilize a cap-motion and plug-and-latch mechanism to gate their ion-conducting pathways. Generates currents characterized by a linear current-voltage relationship that are sensitive to ruthenium red and gadolinium. Conductance to monovalent alkali ions is highest for K(+), intermediate for Na(+) and lowest for Li(+). Divalent ions except for Mn(2+) permeate the channel but more slowly than the monovalent ions and they also reduce K(+) currents. Plays a key role in epithelial cell adhesion by maintaining integrin activation through R-Ras recruitment to the ER, most probably in its activated state, and subsequent stimulation of calpain signaling. In inner ear hair cells, PIEZO1/2 subunits may constitute part of the mechanotransducer (MET) non-selective cation channel complex where they may act as pore-forming ion-conducting component in the complex. In the kidney, may contribute to the detection of intraluminal pressure changes and to urine flow sensing. Acts as a shear-stress sensor that promotes endothelial cell organization and alignment in the direction of blood flow through calpain activation. Plays a key role in blood vessel formation and vascular structure in both development and adult physiology. Acts as a sensor of phosphatidylserine (PS) flipping at the plasma membrane and governs morphogenesis of muscle cells. In myoblasts, flippase-mediated PS enrichment at the inner leaflet of plasma membrane triggers channel activation and Ca(2+) influx followed by Rho GTPases signal transduction, leading to assembly of cortical actomyosin fibers and myotube formation. The chain is Piezo-type mechanosensitive ion channel component 1 (Piezo1) from Rattus norvegicus (Rat).